The following is a 320-amino-acid chain: Tabersonine synthase (320 aa).

Residues 78 to 80 carry the Involved in the stabilization of the negatively charged intermediate by the formation of the oxyanion hole motif; the sequence is HGA. Gly81 contacts (-)-tabersonine. Residue Ser170 is the Proton acceptor of the active site. Asp266 is a catalytic residue. A (-)-tabersonine-binding site is contributed by Tyr297. The active-site Proton donor/acceptor is Tyr297.

Belongs to the 'GDXG' lipolytic enzyme family. As to quaternary structure, interacts with dehydroprecondylocarpine acetate synthase (DPAS). In terms of tissue distribution, expressed in leaf epidermis.

It localises to the cytoplasm. The protein resides in the cytosol. The protein localises to the nucleus. It catalyses the reaction dehydrosecodine = (-)-tabersonine. It carries out the reaction dihydroprecondylocarpine acetate = (-)-tabersonine + acetate + H(+). Its pathway is alkaloid biosynthesis. Functionally, component of iboga and aspidosperma monoterpenoid indole alkaloids (MIAs, e.g. tabersonine and catharanthine) biosynthesis pathway from 19E-geissoschizine, psychoactive compounds likely to be used in the treatment of opioid dependence. Catalyzes the conversion of dehydrosecodine to tabersonine, a precursor of vindoline; this process starts with the conversion of dihydroprecondylocarpine acetate to dehydrosecodine. The polypeptide is Tabersonine synthase (Catharanthus roseus (Madagascar periwinkle)).